We begin with the raw amino-acid sequence, 135 residues long: ATP synthase epsilon chain (135 aa).

The segment covering 89–100 (SGKAEAELEKAK) has biased composition (basic and acidic residues). Residues 89–114 (SGKAEAELEKAKNQLSQNKDQGNSPE) are disordered. The segment covering 101 to 112 (NQLSQNKDQGNS) has biased composition (polar residues).

This sequence belongs to the ATPase epsilon chain family. In terms of assembly, F-type ATPases have 2 components, CF(1) - the catalytic core - and CF(0) - the membrane proton channel. CF(1) has five subunits: alpha(3), beta(3), gamma(1), delta(1), epsilon(1). CF(0) has three main subunits: a, b and c.

Its subcellular location is the cellular thylakoid membrane. In terms of biological role, produces ATP from ADP in the presence of a proton gradient across the membrane. The sequence is that of ATP synthase epsilon chain from Prochlorococcus marinus (strain NATL2A).